Reading from the N-terminus, the 405-residue chain is Cystathionine gamma-lyase (405 aa).

3 residues coordinate substrate: Arg-62, Tyr-114, and Arg-119. Lys-212 is subject to N6-(pyridoxal phosphate)lysine. Residue Glu-339 participates in substrate binding.

The protein belongs to the trans-sulfuration enzymes family. Homotetramer. Interacts with CALM in a calcium-dependent manner. Requires pyridoxal 5'-phosphate as cofactor.

The protein resides in the cytoplasm. The catalysed reaction is L,L-cystathionine + H2O = 2-oxobutanoate + L-cysteine + NH4(+). It catalyses the reaction L-cysteine + H2O = hydrogen sulfide + pyruvate + NH4(+) + H(+). It carries out the reaction L-homocysteine + H2O = 2-oxobutanoate + hydrogen sulfide + NH4(+) + H(+). The enzyme catalyses L-homoserine = 2-oxobutanoate + NH4(+). The catalysed reaction is L-selenocystathionine + H2O = L-selenocysteine + 2-oxobutanoate + NH4(+). Its pathway is amino-acid biosynthesis; L-cysteine biosynthesis; L-cysteine from L-homocysteine and L-serine: step 2/2. Functionally, catalyzes the last step in the trans-sulfuration pathway from L-methionine to L-cysteine in a pyridoxal-5'-phosphate (PLP)-dependent manner, which consists on cleaving the L,L-cystathionine molecule into L-cysteine, ammonia and 2-oxobutanoate. Part of the L-cysteine derived from the trans-sulfuration pathway is utilized for biosynthesis of the ubiquitous antioxidant glutathione. Besides its role in the conversion of L-cystathionine into L-cysteine, it utilizes L-cysteine and L-homocysteine as substrates (at much lower rates than L,L-cystathionine) to produce hydrogen sulfide (H2S). In vitro, it converts two L-cysteine molecules into lanthionine and H2S, and two L-homocysteine molecules to homolanthionine and H2S, which can be particularly relevant under conditions of severe hyperhomocysteinemia. Lanthionine and homolanthionine are structural homologs of L,L-cystathionine that differ by the absence or presence of an extra methylene group, respectively. Acts as a cysteine-protein sulfhydrase by mediating sulfhydration of target proteins: sulfhydration consists of converting -SH groups into -SSH on specific cysteine residues of target proteins such as GAPDH, PTPN1 and NF-kappa-B subunit RELA, thereby regulating their function. By generating the gasotransmitter H2S, it participates in a number of physiological processes such as vasodilation, bone protection, and inflammation. Plays an essential role in myogenesis by contributing to the biogenesis of H2S in skeletal muscle tissue. Can also accept homoserine as substrate. Catalyzes the elimination of selenocystathionine (which can be derived from the diet) to yield selenocysteine, ammonia and 2-oxobutanoate. The protein is Cystathionine gamma-lyase (CTH) of Macaca fascicularis (Crab-eating macaque).